A 688-amino-acid chain; its full sequence is MADLEAVLADVSYLMAMEKSKTAPAARASKKVVLPEPSIRSVMQRYLAERNEITFDKIFNQKIGFLLFKDFCLNEIGEAVPQVKFYEEIKEYEKLDNEEDRLRRSRQMYDAYIMRELLSSTHQFSKQAVEHVQSHLSKKQVTATLFQPYIEEICESLRGDIFQKFMESDKFTRFCQWKNVELNIHLSMNDFSVHRIIGRGGFGEVYGCRKADTGKMYAMKCLDKKRVKMKQGETLALNERIMLSLVSTGDCPFIVCMTYAFHTPDKLCFILDLMNGGDMHYHLSQHGVFSEKEMRFYASEIILGLEHMHTCFVVYRDLKPANILLDEYGHVRISDLGLACDFSKKKPHASVGTHGYMAPEVLQKGTCYDSSADWFSLGCMLFKLLRGHSPFRQHKTKDKHEIDRMTLTVNVQLPDAFSPELRSLLEGLLQRDVSQRLGCGGGGARELKEHIFFKGIDWQHVYLRKYPPPLIPPRGEVNAADAFDIGSFDEEDTKGIKLLDCDQDLYKNFPLVISERWQQEVVETIYDAVNADTDKIEARRKAKNKQLGQEEDYAMGKDCIMHGYMLKLGNPFLTQWQRRYFYLFPNRLEWRGEGESRQSLLTMEQIMSVEETQIKDRKCILLRIKGGKQFVLQCESDPEFAQWLKELTCTFNEAQRLLRRAPKFLNKPRAAILEFSKPPLCHRNSSGL.

Residues 1 to 190 (MADLEAVLAD…ELNIHLSMND (190 aa)) form an N-terminal region. The RGS domain occupies 54–175 (TFDKIFNQKI…MESDKFTRFC (122 aa)). One can recognise a Protein kinase domain in the interval 191–453 (FSVHRIIGRG…ARELKEHIFF (263 aa)). Residues 197-205 (IGRGGFGEV) and lysine 220 each bind ATP. Aspartate 317 functions as the Proton acceptor in the catalytic mechanism. Residues 454–521 (KGIDWQHVYL…VISERWQQEV (68 aa)) form the AGC-kinase C-terminal domain. Residues 558–652 (DCIMHGYMLK…WLKELTCTFN (95 aa)) enclose the PH domain.

Belongs to the protein kinase superfamily. AGC Ser/Thr protein kinase family. GPRK subfamily. Interacts with GIT1. Post-translationally, ubiquitinated.

It is found in the postsynapse. It localises to the presynapse. It catalyses the reaction [beta-adrenergic receptor] + ATP = [beta-adrenergic receptor]-phosphate + ADP + H(+). Functionally, specifically phosphorylates the agonist-occupied form of the beta-adrenergic and closely related receptors. This Mus musculus (Mouse) protein is G protein-coupled receptor kinase 3.